The primary structure comprises 128 residues: Small ribosomal subunit protein bS6 (128 aa).

Positions 100–128 (SPMAKAKEERFTRRDDERREEATEAASEE) are disordered. Residues 104-121 (KAKEERFTRRDDERREEA) are compositionally biased toward basic and acidic residues.

The protein belongs to the bacterial ribosomal protein bS6 family.

In terms of biological role, binds together with bS18 to 16S ribosomal RNA. This is Small ribosomal subunit protein bS6 from Aeromonas hydrophila subsp. hydrophila (strain ATCC 7966 / DSM 30187 / BCRC 13018 / CCUG 14551 / JCM 1027 / KCTC 2358 / NCIMB 9240 / NCTC 8049).